A 207-amino-acid chain; its full sequence is Dephospho-CoA kinase (207 aa).

Residues 5 to 202 enclose the DPCK domain; sequence VVGLTGGIGS…LQYLKLSAEK (198 aa). ATP is bound at residue 13–18; the sequence is GSGKST.

The protein belongs to the CoaE family.

The protein localises to the cytoplasm. It carries out the reaction 3'-dephospho-CoA + ATP = ADP + CoA + H(+). It functions in the pathway cofactor biosynthesis; coenzyme A biosynthesis; CoA from (R)-pantothenate: step 5/5. In terms of biological role, catalyzes the phosphorylation of the 3'-hydroxyl group of dephosphocoenzyme A to form coenzyme A. This Dechloromonas aromatica (strain RCB) protein is Dephospho-CoA kinase.